Reading from the N-terminus, the 450-residue chain is Regulator of sigma-E protease RseP (450 aa).

A helical membrane pass occupies residues 1-21 (MLSFLWDLASFIVALGVLITV). A Zn(2+)-binding site is contributed by histidine 22. The Periplasmic segment spans residues 22-103 (HEFGHFWVAR…VGQRAAIIAA (82 aa)). The active site involves glutamate 23. Histidine 26 serves as a coordination point for Zn(2+). Residues 104-124 (GPVANFIFAIFAYWLVFIIGV) traverse the membrane as a helical segment. The Cytoplasmic portion of the chain corresponds to 125-375 (PGVRPVVGEI…KGAGMTAELG (251 aa)). PDZ domains are found at residues 127–220 (VRPV…PRGP) and 222–309 (IEPV…PKVI). The chain crosses the membrane as a helical span at residues 376–396 (VVYYLPFLALISVNLGIINLF). Topologically, residues 397–429 (PLPVLDGGHLLFLAIEKIKGGPVSERVQDFCYR) are periplasmic. The chain crosses the membrane as a helical span at residues 430–450 (IGSILLVLLMGLALFNDFSRL).

Belongs to the peptidase M50B family. In terms of assembly, interacts with RseA; the third transmembrane domain can be cross-linked to the transmembrane domain of RseA. Zn(2+) is required as a cofactor.

Its subcellular location is the cell inner membrane. Inhibited by Zn(2+) chelator 1,10-phenanthroline. Functionally, a site-2 regulated intramembrane protease (S2P) that cleaves the peptide bond between 'Ala-108' and 'Cys-109' in the transmembrane region of RseA. Part of a regulated intramembrane proteolysis (RIP) cascade. Acts on DegS-cleaved RseA to release the cytoplasmic domain of RseA, residue 'Val-148' of RseA may be required for this. This provides the cell with sigma-E (RpoE) activity through the proteolysis of RseA. Can also cleave sequences in transmembrane regions of other proteins (such as LacY) as well as liberated signal peptides of beta-lactamase, OmpF, LivK, SecM, PhoA, LivJ, OmpC, Lpp and TorA, probably within the membrane. Cleaves FecR within its transmembrane region to release an N-terminal cytoplasmic fragment which binds to sigma factor FecI, allowing it to activate transcription of the fecABCDE operon which mediates ferric citrate transport. This is Regulator of sigma-E protease RseP (rseP) from Escherichia coli (strain K12).